The primary structure comprises 254 residues: DNA repair protein RecO (254 aa).

This sequence belongs to the RecO family.

In terms of biological role, involved in DNA repair and RecF pathway recombination. This chain is DNA repair protein RecO, found in Anaeromyxobacter dehalogenans (strain 2CP-1 / ATCC BAA-258).